The following is a 107-amino-acid chain: U1-lycotoxin-Ls1p (107 aa).

Residues 1-20 (MMKVLVVVALLVTLISYSSS) form the signal peptide. Positions 21 to 41 (EGIDDLEADELLSLMANEQTR) are excised as a propeptide. Intrachain disulfides connect cysteine 44–cysteine 59, cysteine 51–cysteine 68, cysteine 58–cysteine 86, and cysteine 70–cysteine 84.

It belongs to the neurotoxin 19 (CSTX) family. 04 (U1-Lctx) subfamily. As to expression, expressed by the venom gland.

It is found in the secreted. This Lycosa singoriensis (Wolf spider) protein is U1-lycotoxin-Ls1p.